A 443-amino-acid polypeptide reads, in one-letter code: Tol-Pal system protein TolB (443 aa).

Positions 1–18 (MRNIVYFILTLFSLTSYA) are cleaved as a signal peptide.

This sequence belongs to the TolB family. As to quaternary structure, the Tol-Pal system is composed of five core proteins: the inner membrane proteins TolA, TolQ and TolR, the periplasmic protein TolB and the outer membrane protein Pal. They form a network linking the inner and outer membranes and the peptidoglycan layer.

The protein localises to the periplasm. Functionally, part of the Tol-Pal system, which plays a role in outer membrane invagination during cell division and is important for maintaining outer membrane integrity. The sequence is that of Tol-Pal system protein TolB from Rickettsia prowazekii (strain Madrid E).